Here is a 194-residue protein sequence, read N- to C-terminus: A-type ATP synthase subunit E (194 aa).

The protein belongs to the V-ATPase E subunit family. In terms of assembly, has multiple subunits with at least A(3), B(3), C, D, E, F, H, I and proteolipid K(x).

It is found in the cell membrane. Component of the A-type ATP synthase that produces ATP from ADP in the presence of a proton gradient across the membrane. The sequence is that of A-type ATP synthase subunit E from Saccharolobus islandicus (strain Y.N.15.51 / Yellowstone #2) (Sulfolobus islandicus).